The chain runs to 315 residues: Thioredoxin reductase (315 aa).

45-52 (EGNTPGGK) provides a ligand contact to FAD. The cysteines at positions 145 and 148 are disulfide-linked. Residue 288–297 (DCRSKSFRQI) coordinates FAD.

The protein belongs to the class-II pyridine nucleotide-disulfide oxidoreductase family. In terms of assembly, homodimer. Requires FAD as cofactor.

It localises to the cytoplasm. It carries out the reaction [thioredoxin]-dithiol + NADP(+) = [thioredoxin]-disulfide + NADPH + H(+). This chain is Thioredoxin reductase (trxB), found in Mycoplasma genitalium (strain ATCC 33530 / DSM 19775 / NCTC 10195 / G37) (Mycoplasmoides genitalium).